The sequence spans 243 residues: MKSLPLLGILAFAANRLSAKHISHHYDVHIMGNYVDSLKKANPPSESNEMISKARYLNKVYFDICEPAYRDAGAIMTQERFKYIALVLNFLYEFCSAREYELAAVTATVLHNTSYLRIFEAPGSDKYKPRGIFQICTKKNYAILESIAFFYHDYVENPERVGTFSIHVLVDITCFWLHMSFAKKRRIDIYDVLSICNPSEYEILRNKSKYSREEVKKAEERFANRDEIYQKMLSIIYINYYRE.

Residues 1–19 (MKSLPLLGILAFAANRLSA) form the signal peptide. 2 N-linked (GlcNAc...) asparagine glycosylation sites follow: Asn112 and Asn206.

This is an uncharacterized protein from Encephalitozoon cuniculi (strain GB-M1) (Microsporidian parasite).